We begin with the raw amino-acid sequence, 547 residues long: CTP synthase (547 aa).

Residues 1 to 265 are amidoligase domain; the sequence is MTRYVFITGG…DEIVLRKLHI (265 aa). S13 provides a ligand contact to CTP. S13 serves as a coordination point for UTP. Residues 14–19 and D71 contribute to the ATP site; that span reads SLGKGI. 2 residues coordinate Mg(2+): D71 and E139. CTP is bound by residues 146-148, 186-191, and K222; these read DIE and KTKPTQ. UTP-binding positions include 186–191 and K222; that span reads KTKPTQ. One can recognise a Glutamine amidotransferase type-1 domain in the interval 290-541; it reads TVGMVGKYVD…IRAARAQHEK (252 aa). Residue G351 participates in L-glutamine binding. The active-site Nucleophile; for glutamine hydrolysis is the C378. Residues 379–382, E402, and R469 each bind L-glutamine; that span reads LGMQ. Active-site residues include H514 and E516.

It belongs to the CTP synthase family. In terms of assembly, homotetramer.

The catalysed reaction is UTP + L-glutamine + ATP + H2O = CTP + L-glutamate + ADP + phosphate + 2 H(+). It carries out the reaction L-glutamine + H2O = L-glutamate + NH4(+). It catalyses the reaction UTP + NH4(+) + ATP = CTP + ADP + phosphate + 2 H(+). The protein operates within pyrimidine metabolism; CTP biosynthesis via de novo pathway; CTP from UDP: step 2/2. With respect to regulation, allosterically activated by GTP, when glutamine is the substrate; GTP has no effect on the reaction when ammonia is the substrate. The allosteric effector GTP functions by stabilizing the protein conformation that binds the tetrahedral intermediate(s) formed during glutamine hydrolysis. Inhibited by the product CTP, via allosteric rather than competitive inhibition. Catalyzes the ATP-dependent amination of UTP to CTP with either L-glutamine or ammonia as the source of nitrogen. Regulates intracellular CTP levels through interactions with the four ribonucleotide triphosphates. The sequence is that of CTP synthase from Thioalkalivibrio sulfidiphilus (strain HL-EbGR7).